The primary structure comprises 591 residues: Protein enabled homolog (591 aa).

In terms of domain architecture, WH1 spans 1 to 111 (MSEQSICQAR…SAMMHALEVL (111 aa)). Residues 115-136 (ETGPTLPRQNSQLPAQVQNGPS) show a composition bias toward polar residues. Positions 115-146 (ETGPTLPRQNSQLPAQVQNGPSQEELEIQRRQ) are disordered. Ser-125 carries the post-translational modification Phosphoserine. Residues 135–265 (PSQEELEIQR…LEWERERRIS (131 aa)) adopt a coiled-coil conformation. 9 consecutive repeat copies span residues 156–160 (LERER), 161–165 (LERER), 166–170 (MERER), 171–175 (LERER), 176–180 (LERER), 181–185 (LERER), 186–190 (LEQEQ), 191–195 (LERER), and 196–200 (QERER). Positions 156-200 (LERERLERERMERERLERERLERERLERERLEQEQLERERQERER) are 9 X 5 AA tandem repeats of [LMQ]-E-[QR]-E-[QR]. Residues 221–264 (RLDRERQERQERERLERLERERQERERQEQLEREQLEWERERRI) show a composition bias toward basic and acidic residues. Residues 221–379 (RLDRERQERQ…PPLPASGFFL (159 aa)) form a disordered region. A Phosphoserine; by PKA modification is found at Ser-265. A compositionally biased stretch (polar residues) spans 275-305 (TPLNSVLGDSSASEPGLQAASQPAETPSQQG). 2 stretches are compositionally biased toward pro residues: residues 311–323 (LAPP…PPGP) and 330–373 (LPPP…PPLP). The segment at 391–411 (GLAAAIAGAKLRKVSRMEDTS) is EVH2 block A. The segment at 391–588 (GLAAAIAGAK…DAIRQELSKS (198 aa)) is EVH2. The short motif at 400 to 403 (KLRK) is the KLKR element. Residues 405-549 (SRMEDTSFPS…LSQPSANGVQ (145 aa)) form a disordered region. Residues 432 to 443 (RGNGPLPLGGSG) show a composition bias toward gly residues. The segment at 442–459 (SGLMEEMSALLARRRRIA) is EVH2 block B. Residue Ile-465 is modified to Phosphothreonine. Residues Glu-471 and Glu-475 each carry the phosphoserine modification. Composition is skewed to polar residues over residues 479–491 (PVTS…STPE) and 499–509 (RTNTMNGSKSP). Phosphothreonine is present on Thr-502. Phosphoserine occurs at positions 506, 508, and 512. Residues 538 to 549 (TPLSQPSANGVQ) are compositionally biased toward polar residues. Residues 554-588 (DYDRLKQDILDEMRKELTKLKEELIDAIRQELSKS) form an EVH2 block C region. Residues 557-587 (RLKQDILDEMRKELTKLKEELIDAIRQELSK) are a coiled coil.

The protein belongs to the Ena/VASP family. In terms of assembly, homotetramer. Interacts with APBB1IP, APBB1, PFN1 and ROBO4. Isoforms, containing the polyproline-rich regions with PPLP motifs, bind the WW domain of APBB1IP. Isoforms, containing the PPSY motif, bind, in vitro, to the WW2 and WW3 domains of NEDD4 and to the WW1 domain of YAP1. Binds the SH3 domain of BAIAP2-alpha but only after the autoinhibitory region of BAIAP2-alpha has been blocked by interaction with CDC42. Interacts, via the EVH1/WH1 domain, with the Pro-rich domains from VCL, ZYX and Listeria monocytogenes actA and with TES (via LIM domains). The TES LIM domain and the Pro-rich domains from VCL or ZYX compete for the same binding site. Interaction with ZYX is important for targeting ENAH to focal adhesions and enhances production of actin-rich structures at the apical surface of cells. Interacts, through the Pro-rich region, with the C-terminal SH3 domain of DNMPB. Binds GPHN. Interacts with FAT1 (via EVH1 domains). Heterotrimer with TES and ACTL7A. Interacts with PRPF40A. In terms of processing, NTN1-induced PKA phosphorylation on Ser-265 directly parallels the formation of filopodial protrusions. In terms of tissue distribution, expressed in myoepithelia of parotid, breast, bronchial glands and sweat glands. Expressed in colon-rectum muscolaris mucosae epithelium, pancreas acinar ductal epithelium, endometrium epithelium, prostate fibromuscolar stroma and placenta vascular media. Overexpressed in a majority of breast cancer cell lines and primary breast tumor lesions.

Its subcellular location is the cytoplasm. The protein resides in the cytoskeleton. It localises to the cell projection. The protein localises to the lamellipodium. It is found in the filopodium. Its subcellular location is the synapse. The protein resides in the cell junction. It localises to the focal adhesion. In terms of biological role, ena/VASP proteins are actin-associated proteins involved in a range of processes dependent on cytoskeleton remodeling and cell polarity such as axon guidance and lamellipodial and filopodial dynamics in migrating cells. ENAH induces the formation of F-actin rich outgrowths in fibroblasts. Acts synergistically with BAIAP2-alpha and downstream of NTN1 to promote filipodia formation. The polypeptide is Protein enabled homolog (ENAH) (Homo sapiens (Human)).